We begin with the raw amino-acid sequence, 156 residues long: Ribosomal RNA large subunit methyltransferase H (156 aa).

S-adenosyl-L-methionine-binding positions include L73, G104, and L123–L128.

This sequence belongs to the RNA methyltransferase RlmH family. In terms of assembly, homodimer.

It is found in the cytoplasm. The catalysed reaction is pseudouridine(1915) in 23S rRNA + S-adenosyl-L-methionine = N(3)-methylpseudouridine(1915) in 23S rRNA + S-adenosyl-L-homocysteine + H(+). In terms of biological role, specifically methylates the pseudouridine at position 1915 (m3Psi1915) in 23S rRNA. The chain is Ribosomal RNA large subunit methyltransferase H from Serratia proteamaculans (strain 568).